Here is a 408-residue protein sequence, read N- to C-terminus: UPF0496 protein At5g66670 (408 aa).

A run of 2 helical transmembrane segments spans residues 239–259 (VVFA…AAMM) and 262–282 (PVLS…GMWC).

It belongs to the UPF0496 family.

The protein localises to the membrane. The protein is UPF0496 protein At5g66670 of Arabidopsis thaliana (Mouse-ear cress).